Reading from the N-terminus, the 437-residue chain is Adenylosuccinate synthetase (437 aa).

GTP is bound by residues 12–18 (GDEGKGK) and 40–42 (GHT). Residue aspartate 13 is the Proton acceptor of the active site. Residues aspartate 13 and glycine 40 each contribute to the Mg(2+) site. IMP-binding positions include 13–16 (DEGK), 38–41 (NAGH), threonine 131, arginine 145, glutamine 226, threonine 241, and arginine 305. The active-site Proton donor is the histidine 41. 301–307 (ATTGRRR) provides a ligand contact to substrate. Residues arginine 307, 333–335 (KLD), and 415–417 (SVG) each bind GTP.

It belongs to the adenylosuccinate synthetase family. In terms of assembly, homodimer. Mg(2+) serves as cofactor.

The protein localises to the cytoplasm. The catalysed reaction is IMP + L-aspartate + GTP = N(6)-(1,2-dicarboxyethyl)-AMP + GDP + phosphate + 2 H(+). The protein operates within purine metabolism; AMP biosynthesis via de novo pathway; AMP from IMP: step 1/2. Plays an important role in the de novo pathway of purine nucleotide biosynthesis. Catalyzes the first committed step in the biosynthesis of AMP from IMP. The polypeptide is Adenylosuccinate synthetase (Desulfotalea psychrophila (strain LSv54 / DSM 12343)).